Reading from the N-terminus, the 562-residue chain is MASASSGPSSSVGFSSFDPAVPSCTLSSAASGIKRPMASEVLEARQDSYISLVPYASGMPIKKIGHRSVDSSGETTYKKTTSSALKGAIQLGITHTVGSLSTKPERDVLMQDFYVVESIFFPSEGSNLTPAHHYNDFRFKTYAPVAFRYFRELFGIRPDDYLYSLCSEPLIELCSSGASGSLFYVSSDDEFIIKTVQHKEAEFLQKLLPGYYMNLNQNPRTLLPKFYGLYCVQAGGKNIRIVVMNNLLPRSVKMHIKYDLKGSTYKRRASQKEREKPLPTFKDLDFLQDIPDGLFLDADMYNALCKTLQRDCLVLQSFKIMDYSLLMSIHNIDHAQREPLSSETQYSVDTRRPAPQKALYSTAMESIQGEARRGGTMETDDHMGGIPARNSKGERLLLYIGIIDILQSYRFVKKLEHSWKALVHDGDTVSVHRPGFYAERFQRFMCNTVFKKIPLKPSPSKKFRSGSSFSRRAGSSGNSCITYQPSVSGEHKAQVTTKAEVEPGVHLGRPDVLPQTPPLEEISEGSPIPDPSFSPLVGETLQMLTTSTTLEKLEVAESEFTH.

In terms of domain architecture, PIPK spans 81-449 (TSSALKGAIQ…RFQRFMCNTV (369 aa)). Residue Lys-103 forms a Glycyl lysine isopeptide (Lys-Gly) (interchain with G-Cter in ubiquitin) linkage. Ser-486 carries the post-translational modification Phosphoserine. The segment at 506-526 (HLGRPDVLPQTPPLEEISEGS) is disordered.

As to quaternary structure, interacts with RAC1. Interacts with TUT1. Forms a complex with CDH1/E-cadherin, CTNNB1/beta-catenin and CTNND1 at the plasma membrane upon calcium stimulation. Found in a ternary complex with IRS1 and DGKZ in the absence of insulin stimulation. Interacts with DGKZ. Interacts with PIP4K2C; the interaction inhibits PIP5K1A kinase activity. As to expression, highly expressed in heart, placenta, skeletal muscle, kidney and pancreas. Detected at lower levels in brain, lung and liver.

Its subcellular location is the cell membrane. It localises to the cytoplasm. The protein resides in the nucleus. The protein localises to the nucleus speckle. It is found in the cell projection. Its subcellular location is the ruffle. It localises to the lamellipodium. The catalysed reaction is a 1,2-diacyl-sn-glycero-3-phospho-(1D-myo-inositol 4-phosphate) + ATP = a 1,2-diacyl-sn-glycero-3-phospho-(1D-myo-inositol-4,5-bisphosphate) + ADP + H(+). It carries out the reaction 1-octadecanoyl-2-(5Z,8Z,11Z,14Z)-eicosatetraenoyl-sn-glycero-3-phospho-1D-myo-inositol 4-phosphate + ATP = 1-octadecanoyl-2-(5Z,8Z,11Z,14Z)-eicosatetraenoyl-sn-glycero-3-phospho-1D-myo-inositol 4,5-bisphosphate + ADP + H(+). It catalyses the reaction 1,2-dihexadecanoyl-sn-glycero-3-phospho-(1D-myo-inositol-4-phosphate) + ATP = 1,2-dihexadecanoyl-sn-glycero-3-phospho-(1D-myo-inositol-4,5-bisphosphate) + ADP + H(+). The enzyme catalyses 1-octadecanoyl-2-(9Z)-octadecenoyl-sn-glycero-3-phospho-1D-myo-inositol 4-phosphate + ATP = 1-octadecanoyl-2-(9Z)-octadecenoyl-sn-glycero-3-phospho-1D-myo-inositol 4,5-bisphosphate + ADP + H(+). The catalysed reaction is 1-octadecanoyl-2-(9Z)-octadecenoyl-sn-glycero-3-phospho-1D-myo-inositol + ATP = 1-octadecanoyl-2-(9Z)-octadecenoyl-sn-glycero-3-phospho-1D-myo-inositol 5-phosphate + ADP + H(+). It carries out the reaction 1-octadecanoyl-2-(9Z,12Z)-octadecadienoyl-sn-glycero-3-phospho-1D-myo-inositol + ATP = 1-octadecanoyl-2-(9Z,12Z)-octadecadienoyl-sn-glycero-3-phospho-1D-myo-inositol 5-phosphate + ADP + H(+). It catalyses the reaction 1-octadecanoyl-2-(5Z,8Z,11Z,14Z-eicosatetraenoyl)-sn-glycero-3-phospho-(1D-myo-inositol) + ATP = 1-octadecanoyl-2-(5Z,8Z,11Z,14Z)-eicosatetraenoyl-sn-glycero-3-phospho-1D-myo-inositol 5-phosphate + ADP + H(+). The enzyme catalyses 1,2-di-(9Z,12Z)-octadecadienoyl-sn-glycero-3-phospho-1D-myo-inositol + ATP = 1,2-di(9Z,12Z)-octadecadienoyl-sn-glycero-3-phospho-1D-myo-inositol 5-phosphate + ADP + H(+). Its activity is regulated as follows. Activated by diarachidonoyl phosphatidic acid (DAPA), when 1,2-dipalmitoyl-PI4P is used as a substrate. In terms of biological role, catalyzes the phosphorylation of phosphatidylinositol 4-phosphate (PtdIns(4)P/PI4P) to form phosphatidylinositol 4,5-bisphosphate (PtdIns(4,5)P2/PIP2), a lipid second messenger that regulates several cellular processes such as signal transduction, vesicle trafficking, actin cytoskeleton dynamics, cell adhesion, and cell motility. PtdIns(4,5)P2 can directly act as a second messenger or can be utilized as a precursor to generate other second messengers: inositol 1,4,5-trisphosphate (IP3), diacylglycerol (DAG) or phosphatidylinositol-3,4,5-trisphosphate (PtdIns(3,4,5)P3/PIP3). PIP5K1A-mediated phosphorylation of PtdIns(4)P is the predominant pathway for PtdIns(4,5)P2 synthesis. Can also use phosphatidylinositol (PtdIns) as substrate in vitro. Together with PIP5K1C, is required for phagocytosis, both enzymes regulating different types of actin remodeling at sequential steps. Promotes particle ingestion by activating the WAS GTPase-binding protein that induces Arp2/3 dependent actin polymerization at the nascent phagocytic cup. Together with PIP5K1B, is required, after stimulation by G-protein coupled receptors, for the synthesis of IP3 that will induce stable platelet adhesion. Recruited to the plasma membrane by the E-cadherin/beta-catenin complex where it provides the substrate PtdIns(4,5)P2 for the production of PtdIns(3,4,5)P3, IP3 and DAG, that will mobilize internal calcium and drive keratinocyte differentiation. Positively regulates insulin-induced translocation of SLC2A4 to the cell membrane in adipocytes. Together with PIP5K1C has a role during embryogenesis. Independently of its catalytic activity, is required for membrane ruffling formation, actin organization and focal adhesion formation during directional cell migration by controlling integrin-induced translocation of the small GTPase RAC1 to the plasma membrane. Also functions in the nucleus where it acts as an activator of TUT1 adenylyltransferase activity in nuclear speckles, thereby regulating mRNA polyadenylation of a select set of mRNAs. The protein is Phosphatidylinositol 4-phosphate 5-kinase type-1 alpha of Homo sapiens (Human).